The sequence spans 184 residues: CASP-like protein 1U1 (184 aa).

Residues 1–30 are Cytoplasmic-facing; that stretch reads MSSTGTTLSASEGDKGFRNGAAPAKSKSHS. A helical transmembrane segment spans residues 31 to 51; the sequence is TIALLRLLAFAATLSAFVTMI. Topologically, residues 52–76 are extracellular; that stretch reads TNKQKITIGPFTRWSKWHYSDAFMW. A helical transmembrane segment spans residues 77–97; that stretch reads FVVANCIAFIYLLFAAILGLI. The Cytoplasmic segment spans residues 98 to 111; it reads SHSPMLVKHLVILD. Residues 112-132 form a helical membrane-spanning segment; the sequence is LIVSYMLFSAASAATAVAYIG. Residues 133-154 are Extracellular-facing; the sequence is KNGISQPGWTAICGVFERYCHH. A helical membrane pass occupies residues 155–175; the sequence is VAGALVACFLGWLFLTIAVFL. Residues 176-184 are Cytoplasmic-facing; it reads GMRRSPAAV.

It belongs to the Casparian strip membrane proteins (CASP) family. In terms of assembly, homodimer and heterodimers.

It localises to the cell membrane. In Marchantia polymorpha (Common liverwort), this protein is CASP-like protein 1U1.